The primary structure comprises 280 residues: UDP-3-O-acyl-N-acetylglucosamine deacetylase (280 aa).

Zn(2+) contacts are provided by His-79, His-237, and Asp-241. The active-site Proton donor is His-264.

It belongs to the LpxC family. It depends on Zn(2+) as a cofactor.

It catalyses the reaction a UDP-3-O-[(3R)-3-hydroxyacyl]-N-acetyl-alpha-D-glucosamine + H2O = a UDP-3-O-[(3R)-3-hydroxyacyl]-alpha-D-glucosamine + acetate. It functions in the pathway glycolipid biosynthesis; lipid IV(A) biosynthesis; lipid IV(A) from (3R)-3-hydroxytetradecanoyl-[acyl-carrier-protein] and UDP-N-acetyl-alpha-D-glucosamine: step 2/6. In terms of biological role, catalyzes the hydrolysis of UDP-3-O-myristoyl-N-acetylglucosamine to form UDP-3-O-myristoylglucosamine and acetate, the committed step in lipid A biosynthesis. The protein is UDP-3-O-acyl-N-acetylglucosamine deacetylase of Chlamydia felis (strain Fe/C-56) (Chlamydophila felis).